Here is a 103-residue protein sequence, read N- to C-terminus: UPF0145 protein BT9727_3206 (103 aa).

The protein belongs to the UPF0145 family.

The sequence is that of UPF0145 protein BT9727_3206 from Bacillus thuringiensis subsp. konkukian (strain 97-27).